We begin with the raw amino-acid sequence, 606 residues long: Phosphomethylpyrimidine synthase (606 aa).

A compositionally biased stretch (polar residues) spans M1–Q13. Disordered regions lie at residues M1–D49 and A105–P147. The segment covering N14–G31 has biased composition (low complexity). Residues A105 to K117 are compositionally biased toward basic and acidic residues. Residues N213, M242, Y271, H307, S327–G329, D368–R371, and E407 each bind substrate. H411 contacts Zn(2+). Y434 contributes to the substrate binding site. H475 serves as a coordination point for Zn(2+). [4Fe-4S] cluster is bound by residues C555, C558, and C563.

The protein belongs to the ThiC family. It depends on [4Fe-4S] cluster as a cofactor.

It catalyses the reaction 5-amino-1-(5-phospho-beta-D-ribosyl)imidazole + S-adenosyl-L-methionine = 4-amino-2-methyl-5-(phosphooxymethyl)pyrimidine + CO + 5'-deoxyadenosine + formate + L-methionine + 3 H(+). It functions in the pathway cofactor biosynthesis; thiamine diphosphate biosynthesis. Catalyzes the synthesis of the hydroxymethylpyrimidine phosphate (HMP-P) moiety of thiamine from aminoimidazole ribotide (AIR) in a radical S-adenosyl-L-methionine (SAM)-dependent reaction. In Streptomyces griseus subsp. griseus (strain JCM 4626 / CBS 651.72 / NBRC 13350 / KCC S-0626 / ISP 5235), this protein is Phosphomethylpyrimidine synthase.